The primary structure comprises 193 residues: FMN-dependent NADH:quinone oxidoreductase (193 aa).

FMN is bound by residues S9, 15-17, and 137-140; these read SSS and TSGG.

This sequence belongs to the azoreductase type 1 family. In terms of assembly, homodimer. The cofactor is FMN.

It carries out the reaction 2 a quinone + NADH + H(+) = 2 a 1,4-benzosemiquinone + NAD(+). The enzyme catalyses N,N-dimethyl-1,4-phenylenediamine + anthranilate + 2 NAD(+) = 2-(4-dimethylaminophenyl)diazenylbenzoate + 2 NADH + 2 H(+). Functionally, quinone reductase that provides resistance to thiol-specific stress caused by electrophilic quinones. Also exhibits azoreductase activity. Catalyzes the reductive cleavage of the azo bond in aromatic azo compounds to the corresponding amines. The polypeptide is FMN-dependent NADH:quinone oxidoreductase (Pelagibacter ubique (strain HTCC1062)).